A 406-amino-acid chain; its full sequence is MKRAIILVLDSFGIGAAGDADKFGDVGSDTMGHIAEQCDKGLADNGNRKGSLTLPNLSKLGLAMAGKESTGKFSAGLDANAEIIGAYGHAAELSSGKDTPSGHWEIAGVPVLFDWGYFTDKENSFPKELTDRILERANLPGYLGNCHASGTQVLDDLGEEHMKTGMPIFYTSADSVFQIACHEETFGLDNLLTLCQIAREELEDYNIGRVIARPFIGPGKGQFERTGNRRDLSVEPPAATILQKLVDEKGGQVHSIGKISDIYAGCGITKKTKATGIPALFDATKEAIEQAGDNTIVFTNFVDFDSAYGHRRDVAGYAAALEYFDGRLPEIMDMLQEDDILILTADHGCDPTWPGTDHTREHIPVLVYGHKVPAGSLGRRDTFADIGQTLAEYFETSDMEYGKSFL.

Mn(2+) is bound by residues aspartate 10, aspartate 305, histidine 310, aspartate 346, histidine 347, and histidine 358.

Belongs to the phosphopentomutase family. The cofactor is Mn(2+).

It is found in the cytoplasm. It catalyses the reaction 2-deoxy-alpha-D-ribose 1-phosphate = 2-deoxy-D-ribose 5-phosphate. It carries out the reaction alpha-D-ribose 1-phosphate = D-ribose 5-phosphate. The protein operates within carbohydrate degradation; 2-deoxy-D-ribose 1-phosphate degradation; D-glyceraldehyde 3-phosphate and acetaldehyde from 2-deoxy-alpha-D-ribose 1-phosphate: step 1/2. Functionally, isomerase that catalyzes the conversion of deoxy-ribose 1-phosphate (dRib-1-P) and ribose 1-phosphate (Rib-1-P) to deoxy-ribose 5-phosphate (dRib-5-P) and ribose 5-phosphate (Rib-5-P), respectively. The protein is Phosphopentomutase of Aliivibrio fischeri (strain MJ11) (Vibrio fischeri).